Here is a 201-residue protein sequence, read N- to C-terminus: Imidazoleglycerol-phosphate dehydratase (201 aa).

The protein belongs to the imidazoleglycerol-phosphate dehydratase family.

Its subcellular location is the cytoplasm. It carries out the reaction D-erythro-1-(imidazol-4-yl)glycerol 3-phosphate = 3-(imidazol-4-yl)-2-oxopropyl phosphate + H2O. It participates in amino-acid biosynthesis; L-histidine biosynthesis; L-histidine from 5-phospho-alpha-D-ribose 1-diphosphate: step 6/9. In Synechococcus sp. (strain CC9311), this protein is Imidazoleglycerol-phosphate dehydratase.